The following is a 290-amino-acid chain: uncharacterized protein (290 aa).

Residues 161 to 216 are a coiled coil; sequence SNQREVESLEQLVHEQLNKLNTESKMEFENRKNDTKNEVQQLSARIVELHNLLAVS. The helical transmembrane segment at 236-256 threads the bilayer; sequence AGVVMAFTGFLVLVIPFGLGV.

The protein resides in the mitochondrion membrane. This is an uncharacterized protein from Schizosaccharomyces pombe (strain 972 / ATCC 24843) (Fission yeast).